The chain runs to 461 residues: Fumarate hydratase class II (461 aa).

Substrate contacts are provided by residues 97-99 (SGT), 127-130 (HPND), 137-139 (SSN), and Thr185. The Proton donor/acceptor role is filled by His186. Ser316 is an active-site residue. Residues Ser317 and 322-324 (KVN) each bind substrate.

This sequence belongs to the class-II fumarase/aspartase family. Fumarase subfamily. As to quaternary structure, homotetramer.

It localises to the cytoplasm. The catalysed reaction is (S)-malate = fumarate + H2O. Its pathway is carbohydrate metabolism; tricarboxylic acid cycle; (S)-malate from fumarate: step 1/1. Involved in the TCA cycle. Catalyzes the stereospecific interconversion of fumarate to L-malate. The polypeptide is Fumarate hydratase class II (Staphylococcus saprophyticus subsp. saprophyticus (strain ATCC 15305 / DSM 20229 / NCIMB 8711 / NCTC 7292 / S-41)).